The chain runs to 297 residues: Phosphatidylinositol N-acetylglucosaminyltransferase subunit C (297 aa).

Transmembrane regions (helical) follow at residues 67 to 87 (VFVV…WLFG), 88 to 108 (TGLA…GGEG), 153 to 173 (AVFM…AAIV), and 239 to 259 (ALGG…LLLI).

It belongs to the PIGC family. In terms of assembly, component of the glycosylphosphatidylinositol-N-acetylglucosaminyltransferase (GPI-GnT) complex composed at least by PIGA, PIGC, PIGH, PIGP, PIGQ, PIGY and DPM2. Interacts with PIGQ. Interacts with the heterodimer PIGA:PIGH.

It localises to the endoplasmic reticulum membrane. The protein operates within glycolipid biosynthesis; glycosylphosphatidylinositol-anchor biosynthesis. In terms of biological role, part of the glycosylphosphatidylinositol-N-acetylglucosaminyltransferase (GPI-GnT) complex that catalyzes the transfer of N-acetylglucosamine from UDP-N-acetylglucosamine to phosphatidylinositol and participates in the first step of GPI biosynthesis. This Bos taurus (Bovine) protein is Phosphatidylinositol N-acetylglucosaminyltransferase subunit C.